Here is a 152-residue protein sequence, read N- to C-terminus: Putative pseudoazurin (152 aa).

The signal sequence occupies residues 1–23 (MPLKFGLIVATAALIASAASLMA). The 89-residue stretch at 28–116 (VQMLNKGTDG…MGMVALIQVG (89 aa)) folds into the Plastocyanin-like domain. Residues histidine 63, cysteine 101, histidine 104, and methionine 109 each coordinate Cu cation.

The cofactor is Cu cation.

It is found in the periplasm. This soluble electron transfer copper protein is required for the inactivation of copper-containing nitrite reductase in the presence of oxygen. The protein is Putative pseudoazurin (azu) of Rhizobium leguminosarum bv. viciae.